The sequence spans 292 residues: ATP-dependent Clp protease proteolytic subunit 4, chloroplastic (292 aa).

Residues 1–65 constitute a chloroplast transit peptide; the sequence is MGTLSLSSSL…LRFANASIEM (65 aa). Ser66 is modified (N-acetylserine). Ser158 functions as the Nucleophile in the catalytic mechanism. His183 is an active-site residue.

It belongs to the peptidase S14 family. As to quaternary structure, component of the chloroplastic Clp protease core complex which consist of at least 16 proteins: CLPP4 (3 copies), CLPP5 (3 copies), CLPR4 (2 copies), ClpP1 (1 copy), CLPP6 (1 copy), CLPR2 (1 copy), CLPT1 (1 copy), CLPT2 (1 copy) and 3 copies of CLPP3 and/or CLPR1 and/or CLPR3. Interacts with CHIP. The core complex is organized in two heptameric rings, one containing CLPP3,4,5,6 in a 1:2:3:1 ratio and the other CLPP1 and CLPR1,2,3,4 in a 3:1:1:1:1 ratio. In terms of processing, ubiquitinated by CHIP. In terms of tissue distribution, mostly expressed in leaves. Also detected in stems, and to a lower extent, in roots (at protein level).

It localises to the plastid. The protein localises to the chloroplast stroma. The catalysed reaction is Hydrolysis of proteins to small peptides in the presence of ATP and magnesium. alpha-casein is the usual test substrate. In the absence of ATP, only oligopeptides shorter than five residues are hydrolyzed (such as succinyl-Leu-Tyr-|-NHMec, and Leu-Tyr-Leu-|-Tyr-Trp, in which cleavage of the -Tyr-|-Leu- and -Tyr-|-Trp bonds also occurs).. In terms of biological role, cleaves peptides in various proteins in a process that requires ATP hydrolysis. Has a chymotrypsin-like activity. Plays a major role in the degradation of misfolded proteins. Essential protein required for chloroplast development and integrity. Essential for Embryogenesis. In Arabidopsis thaliana (Mouse-ear cress), this protein is ATP-dependent Clp protease proteolytic subunit 4, chloroplastic.